A 402-amino-acid chain; its full sequence is S-adenosylmethionine synthase (402 aa).

137-142 (GQGSAD) is an ATP binding site.

It belongs to the AdoMet synthase 2 family. Mg(2+) serves as cofactor.

It carries out the reaction L-methionine + ATP + H2O = S-adenosyl-L-methionine + phosphate + diphosphate. It participates in amino-acid biosynthesis; S-adenosyl-L-methionine biosynthesis; S-adenosyl-L-methionine from L-methionine: step 1/1. Its function is as follows. Catalyzes the formation of S-adenosylmethionine from methionine and ATP. The polypeptide is S-adenosylmethionine synthase (Pyrobaculum aerophilum (strain ATCC 51768 / DSM 7523 / JCM 9630 / CIP 104966 / NBRC 100827 / IM2)).